The primary structure comprises 289 residues: Pyridoxal kinase PdxY (289 aa).

Substrate contacts are provided by residues Ser9 and 44 to 45; that span reads TQ. ATP is bound by residues Asp112, Ala144, Glu149, Lys183, and 210–213; that span reads RPLV. A substrate-binding site is contributed by Asp225.

The protein belongs to the pyridoxine kinase family. PdxY subfamily. In terms of assembly, homodimer. Mg(2+) serves as cofactor.

The enzyme catalyses pyridoxal + ATP = pyridoxal 5'-phosphate + ADP + H(+). It participates in cofactor metabolism; pyridoxal 5'-phosphate salvage; pyridoxal 5'-phosphate from pyridoxal: step 1/1. In terms of biological role, pyridoxal kinase involved in the salvage pathway of pyridoxal 5'-phosphate (PLP). Catalyzes the phosphorylation of pyridoxal to PLP. The sequence is that of Pyridoxal kinase PdxY from Proteus mirabilis.